Consider the following 634-residue polypeptide: Chaperone protein HtpG (634 aa).

The segment at 1 to 345 (MEHQQNHTFS…SNDLPLNVSR (345 aa)) is a; substrate-binding. The interval 346–562 (EILQDTRVTA…NDDMSTQMAK (217 aa)) is b. The interval 563–634 (LMAQMGQPVP…VGRINKLLLA (72 aa)) is c.

Belongs to the heat shock protein 90 family. Homodimer.

It localises to the cytoplasm. Its function is as follows. Molecular chaperone. Has ATPase activity. The sequence is that of Chaperone protein HtpG from Psychromonas ingrahamii (strain DSM 17664 / CCUG 51855 / 37).